Here is a 118-residue protein sequence, read N- to C-terminus: MIGIDITSTDRIKKMYEKFGDKFYEKFLNPDEIELIKKPETAAGFWAAKEAASKAIGTGIGGSCSFHDIKIKKDALGAPKIKYKKEIRKKFGIKKSHLTITHDAGFAIAVVVNVLKKK.

Residues Asp5 and Glu50 each contribute to the Mg(2+) site.

This sequence belongs to the P-Pant transferase superfamily. AcpS family. Mg(2+) is required as a cofactor.

Its subcellular location is the cytoplasm. It catalyses the reaction apo-[ACP] + CoA = holo-[ACP] + adenosine 3',5'-bisphosphate + H(+). In terms of biological role, transfers the 4'-phosphopantetheine moiety from coenzyme A to a Ser of acyl-carrier-protein. This Aliarcobacter butzleri (strain RM4018) (Arcobacter butzleri) protein is Holo-[acyl-carrier-protein] synthase.